A 472-amino-acid chain; its full sequence is 3-isopropylmalate dehydratase large subunit (472 aa).

[4Fe-4S] cluster-binding residues include C347, C407, and C410.

Belongs to the aconitase/IPM isomerase family. LeuC type 1 subfamily. In terms of assembly, heterodimer of LeuC and LeuD. It depends on [4Fe-4S] cluster as a cofactor.

It carries out the reaction (2R,3S)-3-isopropylmalate = (2S)-2-isopropylmalate. It participates in amino-acid biosynthesis; L-leucine biosynthesis; L-leucine from 3-methyl-2-oxobutanoate: step 2/4. Its function is as follows. Catalyzes the isomerization between 2-isopropylmalate and 3-isopropylmalate, via the formation of 2-isopropylmaleate. This chain is 3-isopropylmalate dehydratase large subunit, found in Bacillus licheniformis (strain ATCC 14580 / DSM 13 / JCM 2505 / CCUG 7422 / NBRC 12200 / NCIMB 9375 / NCTC 10341 / NRRL NRS-1264 / Gibson 46).